Here is a 380-residue protein sequence, read N- to C-terminus: Guanine nucleotide-binding protein alpha-1 subunit (380 aa).

The disordered stretch occupies residues 1-25 (MGSSCSRSHSLSEAETTKNAKSADI). Gly-2 carries N-myristoyl glycine lipidation. Cys-5 is lipidated: S-palmitoyl cysteine. A compositionally biased stretch (basic and acidic residues) spans 10–25 (SLSEAETTKNAKSADI). The 343-residue stretch at 38-380 (HIHKLLLLGA…ESMRRSREGT (343 aa)) folds into the G-alpha domain. Residues 41–54 (KLLLLGAGESGKST) are G1 motif. Residues Glu-49, Ser-50, Gly-51, Lys-52, Ser-53, Thr-54, Asp-163, Leu-188, Tyr-189, Thr-194, Gly-222, Asn-288, Lys-289, Asp-291, and Ala-356 each contribute to the GTP site. Ser-53 provides a ligand contact to Mg(2+). Residues 186–194 (DVLYARVRT) form a G2 motif region. Mg(2+) is bound at residue Thr-194. The interval 215-224 (YRLYDVGGQR) is G3 motif. The interval 284-291 (ILFLNKFD) is G4 motif. The tract at residues 354–359 (TTALDQ) is G5 motif.

This sequence belongs to the G-alpha family. In terms of assembly, g proteins are composed of 3 units; alpha, beta and gamma. The alpha chain contains the guanine nucleotide binding site. Interacts with COLD1. Mg(2+) is required as a cofactor.

It is found in the cell membrane. Functionally, guanine nucleotide-binding proteins (G proteins) are involved as modulators or transducers in various transmembrane signaling systems. May function in a signal transduction pathway required for normal growth and development of internodes, leaves, panicles and seeds. Involved in gibberellin signal transduction. Involved in R gene-mediated disease resistance. Functions upstream of the small GTPase RAC1 in the early steps of signaling. Involved in brassinosteroid response. May not be a signaling molecule in BRI1-mediated perception or transduction. In Oryza sativa subsp. indica (Rice), this protein is Guanine nucleotide-binding protein alpha-1 subunit (GPA1).